The sequence spans 104 residues: Large ribosomal subunit protein uL24 (104 aa).

It belongs to the universal ribosomal protein uL24 family. Part of the 50S ribosomal subunit.

Functionally, one of two assembly initiator proteins, it binds directly to the 5'-end of the 23S rRNA, where it nucleates assembly of the 50S subunit. In terms of biological role, one of the proteins that surrounds the polypeptide exit tunnel on the outside of the subunit. The chain is Large ribosomal subunit protein uL24 from Flavobacterium johnsoniae (strain ATCC 17061 / DSM 2064 / JCM 8514 / BCRC 14874 / CCUG 350202 / NBRC 14942 / NCIMB 11054 / UW101) (Cytophaga johnsonae).